A 1179-amino-acid polypeptide reads, in one-letter code: DNA-directed RNA polymerase subunit beta' (1179 aa).

Cys-60, Cys-62, Cys-75, and Cys-78 together coordinate Zn(2+). Mg(2+) contacts are provided by Asp-450, Asp-452, and Asp-454. Residues Cys-791, Cys-865, Cys-872, and Cys-875 each contribute to the Zn(2+) site.

Belongs to the RNA polymerase beta' chain family. In terms of assembly, the RNAP catalytic core consists of 2 alpha, 1 beta, 1 beta' and 1 omega subunit. When a sigma factor is associated with the core the holoenzyme is formed, which can initiate transcription. Requires Mg(2+) as cofactor. It depends on Zn(2+) as a cofactor.

It catalyses the reaction RNA(n) + a ribonucleoside 5'-triphosphate = RNA(n+1) + diphosphate. Its function is as follows. DNA-dependent RNA polymerase catalyzes the transcription of DNA into RNA using the four ribonucleoside triphosphates as substrates. This is DNA-directed RNA polymerase subunit beta' from Alkaliphilus oremlandii (strain OhILAs) (Clostridium oremlandii (strain OhILAs)).